A 573-amino-acid polypeptide reads, in one-letter code: Chaperone Ric-8 (573 aa).

A compositionally biased stretch (basic and acidic residues) spans 308–324 (ESHKEREQDNEKEKDTE). Disordered regions lie at residues 308–329 (ESHK…GAGA) and 473–493 (GTDY…QQQQ). S477, S478, S480, and S483 each carry phosphoserine.

It belongs to the synembryn family. In terms of assembly, interacts with GDP-bound G(i)-alpha protein G-i-alpha-65A. Does not interact with G-alpha proteins when they are in complex with subunits beta and gamma. Interacts with Frq2 in a Ca(2+)-independent manner but does not interact with Frq1. Expression in the embryo is primarily neural.

The protein localises to the cytoplasm. Its subcellular location is the cell cortex. The protein resides in the presynapse. Chaperone that specifically binds and folds some, but not all, nascent G alpha proteins prior to G protein heterotrimer formation, promoting their stability and activity. Also acts as a guanine nucleotide exchange factor (GEF) for G alpha proteins by stimulating exchange of bound GDP for free GTP. Plays a key role in asymmetric spindle positioning, a step for asymmetric cell division that generates cell diversity during development by activating G(i) alpha protein independently of G-protein coupled receptors. Required during gastrulation and sensory organ precursor (SOP) formation. Plays a role in positively regulating synapse number and neurotransmitter release. The polypeptide is Chaperone Ric-8 (ric8a) (Drosophila melanogaster (Fruit fly)).